The primary structure comprises 134 residues: Syncollin (134 aa).

The first 21 residues, 1–21 (MSPLCLLLLALALVAVPGARG), serve as a signal peptide directing secretion.

As to quaternary structure, monomer and homooligomer; most probably hexameric. Interacts with GP2. According to PubMed:10753942 interaction with syntaxins shown in PubMed:9244306 is physiologically questionable. Contains intrachain disulfide bonds. Specifically expressed in pancreas and also detected in secretory granules of parotid gland (at protein level). Expressed in pancreas, spleen, small intestine, lung and neutrophilic granulocytes (at protein level). Expressed by epithelial cells in duodenum and colon.

The protein resides in the zymogen granule membrane. It is found in the zymogen granule lumen. In terms of biological role, functions in exocytosis in pancreatic acinar cells regulating the fusion of zymogen granules with each other. May have a pore-forming activity on membranes and regulate exocytosis in other exocrine tissues. The polypeptide is Syncollin (Sycn) (Rattus norvegicus (Rat)).